Consider the following 203-residue polypeptide: Proteasome subunit beta 1 (203 aa).

The propeptide at 1-7 is removed in mature form; by autocatalysis; sequence MAEKLKG. T8 acts as the Nucleophile in catalysis.

The protein belongs to the peptidase T1B family. The 20S proteasome core is composed of 14 alpha and 14 beta subunits that assemble into four stacked heptameric rings, resulting in a barrel-shaped structure. The two inner rings, each composed of seven catalytic beta subunits, are sandwiched by two outer rings, each composed of seven alpha subunits. The catalytic chamber with the active sites is on the inside of the barrel. Has a gated structure, the ends of the cylinder being occluded by the N-termini of the alpha-subunits. Is capped at one or both ends by the proteasome regulatory ATPase, PAN.

The protein resides in the cytoplasm. The catalysed reaction is Cleavage of peptide bonds with very broad specificity.. Its activity is regulated as follows. The formation of the proteasomal ATPase PAN-20S proteasome complex, via the docking of the C-termini of PAN into the intersubunit pockets in the alpha-rings, triggers opening of the gate for substrate entry. Interconversion between the open-gate and close-gate conformations leads to a dynamic regulation of the 20S proteasome proteolysis activity. In terms of biological role, component of the proteasome core, a large protease complex with broad specificity involved in protein degradation. This Thermococcus onnurineus (strain NA1) protein is Proteasome subunit beta 1.